A 993-amino-acid polypeptide reads, in one-letter code: Muscular LMNA-interacting protein (993 aa).

Residues 1–51 (MLSEQGLLSDCGNNYFQMTSCILSGSIQTTPQVSAGGSEAKPLIFTFVPTV) are interaction with LMNA. A disordered region spans residues 71–90 (PEESSDKSPETVNRSKSNDY). A compositionally biased stretch (polar residues) spans 80 to 90 (ETVNRSKSNDY). Ser146 carries the post-translational modification Phosphoserine. Disordered stretches follow at residues 152–171 (AASR…AAVR), 186–225 (VRPK…TSEQ), 231–250 (PAFS…PVNL), 300–322 (PHST…KPGL), 334–358 (SHVL…SLKS), 443–481 (SPAS…QGEL), 500–582 (TPLS…IHTY), 677–711 (SALH…TPSL), and 811–864 (LSMH…SQLT). The tract at residues 161–837 (PPGGIGTAAV…GSDTVKTPTT (677 aa)) is required for interaction with ISL1. The segment covering 212 to 225 (KHGQLTSSPTTSEQ) has biased composition (polar residues). Over residues 300–315 (PHSTQLSGSNLPSSTA) the composition is skewed to polar residues. A compositionally biased stretch (low complexity) spans 343–358 (PRTSSSPPSSSASLKS). The segment covering 500-532 (TPLSQAPSLSPTKQASSSLASMNVERTPSPTLK) has biased composition (polar residues). The span at 533-563 (SNTMLSLLQTSTSSSVGLPPVPPSSSLSSLK) shows a compositional bias: low complexity. Basic and acidic residues predominate over residues 564 to 574 (SKQDGDLRGPE). Polar residues predominate over residues 695–711 (SESTTPNHRSPVSTPSL). The span at 811–822 (LSMHSSDSPSRS) shows a compositional bias: low complexity. A Phosphoserine modification is found at Ser818. Residues 849-864 (ANLSSPSSTVSESQLT) show a composition bias toward polar residues.

As to quaternary structure, directly interacts with LMNA. Interacts with ISL1 (via N-terminal domain); the interaction represses ISL1 transactivator activity. Interactions of ISL1 with MLIP1 and GCN5/KAT2A may be mutually exclusive. Predominantly expressed in the heart and skeletal muscle. Also detected in liver. As to expression, expressed in skeletal muscle.

It localises to the nucleus. It is found in the nucleus envelope. The protein localises to the PML body. Its subcellular location is the cytoplasm. The protein resides in the cytosol. It localises to the cell membrane. It is found in the sarcolemma. In terms of biological role, required for myoblast differentiation into myotubes, possibly acting as a transcriptional regulator of the myogenic program. Required for cardiac adaptation to stress through integrated regulation of the AKT/mTOR pathways and FOXO1. Regulates cardiac homeostasis and plays a role in the protection against cardiac hypertrophy. Binds chromatin. May act as a transcriptional cofactor for ISL1, repressing its transcriptional activity. May also repress MYOCD transcriptional activity. In Homo sapiens (Human), this protein is Muscular LMNA-interacting protein.